Consider the following 204-residue polypeptide: Outer-membrane lipoprotein LolB (204 aa).

The signal sequence occupies residues 1–20 (MLRSRRLALLCLATPLWLAA). Residue Cys-21 is the site of N-palmitoyl cysteine attachment. Cys-21 is lipidated: S-diacylglycerol cysteine. The interval 131–150 (GRAAPGTPSNVTRDANGRPD) is disordered.

Belongs to the LolB family. As to quaternary structure, monomer.

The protein localises to the cell outer membrane. Plays a critical role in the incorporation of lipoproteins in the outer membrane after they are released by the LolA protein. This chain is Outer-membrane lipoprotein LolB, found in Cupriavidus metallidurans (strain ATCC 43123 / DSM 2839 / NBRC 102507 / CH34) (Ralstonia metallidurans).